Here is a 99-residue protein sequence, read N- to C-terminus: Aspartyl/glutamyl-tRNA(Asn/Gln) amidotransferase subunit C (99 aa).

Belongs to the GatC family. As to quaternary structure, heterotrimer of A, B and C subunits.

The enzyme catalyses L-glutamyl-tRNA(Gln) + L-glutamine + ATP + H2O = L-glutaminyl-tRNA(Gln) + L-glutamate + ADP + phosphate + H(+). It catalyses the reaction L-aspartyl-tRNA(Asn) + L-glutamine + ATP + H2O = L-asparaginyl-tRNA(Asn) + L-glutamate + ADP + phosphate + 2 H(+). Its function is as follows. Allows the formation of correctly charged Asn-tRNA(Asn) or Gln-tRNA(Gln) through the transamidation of misacylated Asp-tRNA(Asn) or Glu-tRNA(Gln) in organisms which lack either or both of asparaginyl-tRNA or glutaminyl-tRNA synthetases. The reaction takes place in the presence of glutamine and ATP through an activated phospho-Asp-tRNA(Asn) or phospho-Glu-tRNA(Gln). This Variovorax paradoxus (strain S110) protein is Aspartyl/glutamyl-tRNA(Asn/Gln) amidotransferase subunit C.